We begin with the raw amino-acid sequence, 804 residues long: Endoplasmin (804 aa).

A signal peptide spans Met-1–Ala-21. The short motif at Ser-42–Thr-44 is the SRT pseudosubstrate motif element. Asn-62 carries an N-linked (GlcNAc...) asparagine glycan. Position 64 is a phosphoserine (Ser-64). A glycan (N-linked (GlcNAc...) asparagine) is linked at Asn-107. ATP contacts are provided by Asn-107, Asp-149, and Asn-162. The residue at position 168 (Lys-168) is an N6-(2-hydroxyisobutyryl)lysine. Ser-172 is subject to Phosphoserine. Phe-199 contributes to the ATP binding site. N-linked (GlcNAc...) asparagine glycosylation is present at Asn-217. The interval Thr-288 to Thr-323 is disordered. The segment covering Val-289–Asp-317 has biased composition (acidic residues). Phosphoserine occurs at positions 306 and 403. Residue Lys-404 is modified to N6-succinyllysine. The N-linked (GlcNAc...) asparagine glycan is linked to Asn-445. Position 447 is a phosphoserine (Ser-447). Residue Lys-479 is modified to N6-acetyllysine. N-linked (GlcNAc...) asparagine glycosylation is found at Asn-481 and Asn-502. The residue at position 633 (Lys-633) is an N6-succinyllysine. The interval Asp-750–Leu-804 is disordered. Positions Glu-757–Glu-792 are enriched in acidic residues. Thr-786 is modified (phosphothreonine). A compositionally biased stretch (basic and acidic residues) spans Thr-793–Leu-804. The Prevents secretion from ER motif lies at Lys-801–Leu-804.

This sequence belongs to the heat shock protein 90 family. As to quaternary structure, homodimer; disulfide-linked. Component of an EIF2 complex at least composed of CELF1/CUGBP1, CALR, CALR3, EIF2S1, EIF2S2, HSP90B1 and HSPA5. Part of a large chaperone multiprotein complex comprising DNAJB11, HSP90B1, HSPA5, HYOU, PDIA2, PDIA4, PDIA6, PPIB, SDF2L1, UGGT1 and very small amounts of ERP29, but not, or at very low levels, CALR nor CANX. Interacts with AIMP1; regulates its retention in the endoplasmic reticulum. Hyperglycosylated form interacts with OS9; promoting its degradation by the endoplasmic reticulum associated degradation (ERAD). Interacts with CNPY3. This interaction is disrupted in the presence of ATP. Interacts with TLR4 and TLR9, but not with TLR3. Interacts with MZB1 in a calcium-dependent manner. Interacts with METTL23. Interacts with IL1B; the interaction facilitates cargo translocation into the ERGIC. Interacts with EIF2AK3. Phosphorylated by CK2. Post-translationally, N-glycosylated cotranslationally at Asn-217 by STT3A-containing OST-A complex: this glycosylation is constitutive. In response to various stress, 5 additional facultative sites (Asn-62, Asn-107, Asn-445, Asn-481 and Asn-502) can be glycosylated post-translationally by STT3B-containing OST-B complex, leading to a hyperglycosylated form that is degraded by the ER-associated degradation (ERAD) pathway. In normal conditions, the OST-A complex together with CCDC134 prevent glycosylation at facultative sites during protein folding, thereby preventing hyperglycosylation. Mechanistically, nascent HSP90B1 is tethered during translation to a specialized CCDC134-containing translocon that forms a microenvironment for its folding, in which STT3A associates with the SRT pseudosubstrate motif, and prevents access to facultative glycosylation sites until folding is completed, rendering its facultative sites inaccessible to the OST-B complex.

Its subcellular location is the endoplasmic reticulum lumen. It localises to the sarcoplasmic reticulum lumen. The protein localises to the melanosome. The catalysed reaction is ATP + H2O = ADP + phosphate + H(+). Its function is as follows. ATP-dependent chaperone involved in the processing of proteins in the endoplasmic reticulum, regulating their transport. Together with MESD, acts as a modulator of the Wnt pathway by promoting the folding of LRP6, a coreceptor of the canonical Wnt pathway. When associated with CNPY3, required for proper folding of Toll-like receptors. Promotes folding and trafficking of TLR4 to the cell surface. May participate in the unfolding of cytosolic leaderless cargos (lacking the secretion signal sequence) such as the interleukin 1/IL-1 to facilitate their translocation into the ERGIC (endoplasmic reticulum-Golgi intermediate compartment) and secretion; the translocation process is mediated by the cargo receptor TMED10. In Bos taurus (Bovine), this protein is Endoplasmin (HSP90B1).